Reading from the N-terminus, the 462-residue chain is S-alkyl-thiohydroximate lyase SUR1 (462 aa).

The protein belongs to the class-I pyridoxal-phosphate-dependent aminotransferase family. The cofactor is pyridoxal 5'-phosphate.

In terms of biological role, C-S lyase involved in glucosinolate biosynthesis. Converts S-(alkylacetohydroximoyl)-L-cysteine to thiohydroximate. Functions in auxin homeostasis. Probably required for glucosinolate activation in response to pathogens. The chain is S-alkyl-thiohydroximate lyase SUR1 (SUR1) from Arabidopsis thaliana (Mouse-ear cress).